A 637-amino-acid polypeptide reads, in one-letter code: Probable potassium transport system protein Kup (637 aa).

12 helical membrane-spanning segments follow: residues 24 to 44 (LAIA…LYAL), 64 to 84 (VISL…LLFV), 113 to 133 (AGAL…DAVI), 151 to 171 (PHLS…LFWI), 182 to 202 (LFGP…VYHI), 225 to 245 (LLQA…AEAL), 261 to 281 (AYGL…ALLI), 290 to 310 (PFFL…STVA), 351 to 371 (IYVP…VIGF), 381 to 401 (YGIA…VVMV), 409 to 429 (LLVG…FGAN), and 433 to 453 (VAQG…LLMT).

This sequence belongs to the HAK/KUP transporter (TC 2.A.72) family.

The protein resides in the cell inner membrane. The enzyme catalyses K(+)(in) + H(+)(in) = K(+)(out) + H(+)(out). Functionally, transport of potassium into the cell. Likely operates as a K(+):H(+) symporter. This Burkholderia ambifaria (strain ATCC BAA-244 / DSM 16087 / CCUG 44356 / LMG 19182 / AMMD) (Burkholderia cepacia (strain AMMD)) protein is Probable potassium transport system protein Kup.